We begin with the raw amino-acid sequence, 122 residues long: uncharacterized protein (122 aa).

A helical transmembrane segment spans residues 9-25 (AFPSPVFLGGVFFVFFF).

It localises to the cytoplasm. Its subcellular location is the nucleus. The protein localises to the membrane. This is an uncharacterized protein from Saccharomyces cerevisiae (strain ATCC 204508 / S288c) (Baker's yeast).